A 130-amino-acid polypeptide reads, in one-letter code: NADH-quinone oxidoreductase subunit A (130 aa).

3 helical membrane passes run 15–35 (AIHVALSAGIVAAIIVVATII), 67–87 (FLIAALFVIFDMEAAILFAWA), and 95–115 (WVGLIEAAIFIGVLLLALIYL).

Belongs to the complex I subunit 3 family. As to quaternary structure, NDH-1 is composed of 14 different subunits. Subunits NuoA, H, J, K, L, M, N constitute the membrane sector of the complex.

The protein localises to the cell inner membrane. It carries out the reaction a quinone + NADH + 5 H(+)(in) = a quinol + NAD(+) + 4 H(+)(out). Its function is as follows. NDH-1 shuttles electrons from NADH, via FMN and iron-sulfur (Fe-S) centers, to quinones in the respiratory chain. The immediate electron acceptor for the enzyme in this species is believed to be ubiquinone. Couples the redox reaction to proton translocation (for every two electrons transferred, four hydrogen ions are translocated across the cytoplasmic membrane), and thus conserves the redox energy in a proton gradient. The polypeptide is NADH-quinone oxidoreductase subunit A (Rhodopseudomonas palustris (strain BisA53)).